Here is a 205-residue protein sequence, read N- to C-terminus: MIGKLRGIVDSTGEDWAVIDVGGVGYHVTCSSRTLRNLPPAGGAVTLSIETKVSDEAIRLIGFTTDSEREWFRLLLAVQGVGTRVALGVLGTLAPADLARAIALDDKKAVSAAPGVGPKVAARIVTELKDKVPDSMGLSAALEVGVNGEAVSSVSAPARDAVSALVNLGYPQAQAMGAVAAAAKRLDDAASTEQLIRHGLKELAR.

The domain I stretch occupies residues 1 to 64 (MIGKLRGIVD…DEAIRLIGFT (64 aa)). Residues 65–143 (TDSEREWFRL…DSMGLSAALE (79 aa)) form a domain II region. Positions 144–152 (VGVNGEAVS) are flexible linker. Positions 153 to 205 (SVSAPARDAVSALVNLGYPQAQAMGAVAAAAKRLDDAASTEQLIRHGLKELAR) are domain III.

This sequence belongs to the RuvA family. As to quaternary structure, homotetramer. Forms an RuvA(8)-RuvB(12)-Holliday junction (HJ) complex. HJ DNA is sandwiched between 2 RuvA tetramers; dsDNA enters through RuvA and exits via RuvB. An RuvB hexamer assembles on each DNA strand where it exits the tetramer. Each RuvB hexamer is contacted by two RuvA subunits (via domain III) on 2 adjacent RuvB subunits; this complex drives branch migration. In the full resolvosome a probable DNA-RuvA(4)-RuvB(12)-RuvC(2) complex forms which resolves the HJ.

The protein localises to the cytoplasm. Functionally, the RuvA-RuvB-RuvC complex processes Holliday junction (HJ) DNA during genetic recombination and DNA repair, while the RuvA-RuvB complex plays an important role in the rescue of blocked DNA replication forks via replication fork reversal (RFR). RuvA specifically binds to HJ cruciform DNA, conferring on it an open structure. The RuvB hexamer acts as an ATP-dependent pump, pulling dsDNA into and through the RuvAB complex. HJ branch migration allows RuvC to scan DNA until it finds its consensus sequence, where it cleaves and resolves the cruciform DNA. This Parvibaculum lavamentivorans (strain DS-1 / DSM 13023 / NCIMB 13966) protein is Holliday junction branch migration complex subunit RuvA.